Reading from the N-terminus, the 351-residue chain is sn-1 oleoyl-lipid 12-desaturase (351 aa).

The tract at residues 1–20 (MTLSIVKSEDSSSRPSAVPS) is disordered. 2 helical membrane passes run 44-62 (AWMTVIINVVMVGLGWLGI) and 68-88 (FLLPVVWVFTGTALTGFFVIG). Positions 89–93 (HDCGH) match the Histidine box-1 motif. Residues 100 to 120 (VWVNDWVGHILFLPIIYPFHS) traverse the membrane as a helical segment. The Histidine box-2 signature appears at 125–129 (HNQHH). The next 2 membrane-spanning stretches (helical) occupy residues 199-219 (LLVIGAAAIAFPTMILTIGVW) and 221-241 (FVKFWVIPWLVFHFWMSTFTL). The Histidine box-3 signature appears at 289–293 (HHVTT).

The protein belongs to the fatty acid desaturase type 2 family. The cofactor is Fe(2+).

It is found in the cellular thylakoid membrane. The catalysed reaction is a 1-[(9Z)-octadecenoyl]-2-acyl-glycerolipid + 2 reduced [2Fe-2S]-[ferredoxin] + O2 + 2 H(+) = a 1-[(9Z,12Z)-octadecdienoyl]-2-acyl-glycerolipid + 2 oxidized [2Fe-2S]-[ferredoxin] + 2 H2O. The protein operates within lipid metabolism; polyunsaturated fatty acid biosynthesis. Desaturase involved in fatty acid biosynthesis. Introduces a double bond at carbon 12 of oleoyl groups (18:1) attached to the sn-1 position of the glycerol moiety of membrane glycerolipids. The sequence is that of sn-1 oleoyl-lipid 12-desaturase from Arthrospira platensis (Spirulina platensis).